The chain runs to 122 residues: Large ribosomal subunit protein uL14 (122 aa).

The protein belongs to the universal ribosomal protein uL14 family. Part of the 50S ribosomal subunit. Forms a cluster with proteins L3 and L19. In the 70S ribosome, L14 and L19 interact and together make contacts with the 16S rRNA in bridges B5 and B8.

Its function is as follows. Binds to 23S rRNA. Forms part of two intersubunit bridges in the 70S ribosome. This chain is Large ribosomal subunit protein uL14, found in Pseudomonas aeruginosa (strain LESB58).